The sequence spans 833 residues: DNA ligase (833 aa).

NAD(+)-binding positions include Asp35–Asp39, Ser84–Leu85, and Glu115. Lys117 serves as the catalytic N6-AMP-lysine intermediate. NAD(+) is bound by residues Arg138, Glu175, Lys292, and Lys316. The Zn(2+) site is built by Cys410, Cys413, Cys428, and Cys434. One can recognise a BRCT domain in the interval Leu750 to Pro833.

Belongs to the NAD-dependent DNA ligase family. LigA subfamily. The cofactor is Mg(2+). It depends on Mn(2+) as a cofactor.

The enzyme catalyses NAD(+) + (deoxyribonucleotide)n-3'-hydroxyl + 5'-phospho-(deoxyribonucleotide)m = (deoxyribonucleotide)n+m + AMP + beta-nicotinamide D-nucleotide.. Functionally, DNA ligase that catalyzes the formation of phosphodiester linkages between 5'-phosphoryl and 3'-hydroxyl groups in double-stranded DNA using NAD as a coenzyme and as the energy source for the reaction. It is essential for DNA replication and repair of damaged DNA. The chain is DNA ligase from Xanthomonas euvesicatoria pv. vesicatoria (strain 85-10) (Xanthomonas campestris pv. vesicatoria).